Reading from the N-terminus, the 291-residue chain is Protease HtpX homolog (291 aa).

The next 2 membrane-spanning stretches (helical) occupy residues 4–24 (IALF…VASL) and 38–58 (LGAL…ISLL). Residue His-144 participates in Zn(2+) binding. The active site involves Glu-145. His-148 is a binding site for Zn(2+). The next 2 helical transmembrane spans lie at 159–179 (LIQG…GYAV) and 199–219 (VTTI…VAWF). Glu-224 serves as a coordination point for Zn(2+).

It belongs to the peptidase M48B family. It depends on Zn(2+) as a cofactor.

The protein localises to the cell inner membrane. The chain is Protease HtpX homolog from Paracidovorax citrulli (strain AAC00-1) (Acidovorax citrulli).